We begin with the raw amino-acid sequence, 317 residues long: Ubiquinone biosynthesis protein COQ9-A, mitochondrial (317 aa).

Residues 1-46 constitute a mitochondrion transit peptide; sequence MAASVTRVLKGAGGRQLLLMVARRRPVLMQPFLLMPRKFWVSSALR. The tract at residues 50–97 is disordered; that stretch reads QRQPPFSASSTHAETQGHAEEQYQQKQPPPRYTDQAGEESEGYESEEQ. Over residues 53–63 the composition is skewed to polar residues; the sequence is PPFSASSTHAE. Positions 85-96 are enriched in acidic residues; sequence AGEESEGYESEE. Residue arginine 243 coordinates a 1,2-diacylglycero-3-phosphoethanolamine.

The protein belongs to the COQ9 family. Homodimer. Heterodimer; two heterodimers of COQ7:COQ9 come together on the same side of the lipid pseudo-bilayer and form a curved tetramer with a hydrophobic surface suitable for membrane interaction. These two tetramers assemble into a soluble octamer with a pseudo-bilayer of lipids captured within. Interacts with COQ7; this interaction allows ubiquinone (CoQ) isoprene intermediates presentation to COQ7 and facilitates the COQ7-mediated hydroxylase step.

It localises to the mitochondrion. It functions in the pathway cofactor biosynthesis; ubiquinone biosynthesis. In terms of biological role, membrane-associated protein that warps the membrane surface to access and bind aromatic isoprenes with high specificity, including ubiquinone (CoQ) isoprene intermediates and presents them directly to COQ7, therefore facilitating the COQ7-mediated hydroxylase step. Participates in the biosynthesis of coenzyme Q, also named ubiquinone, an essential lipid-soluble electron transporter for aerobic cellular respiration. The chain is Ubiquinone biosynthesis protein COQ9-A, mitochondrial (coq9-a) from Xenopus laevis (African clawed frog).